We begin with the raw amino-acid sequence, 454 residues long: uncharacterized protein (454 aa).

The N-terminal stretch at 1–21 is a signal peptide; the sequence is MKYKTVKSIPLFLLGSIVFTA. The N-palmitoyl cysteine moiety is linked to residue Cys22. Cys22 carries the S-diacylglycerol cysteine lipid modification. The segment covering 55–64 has biased composition (low complexity); the sequence is ASSSSSTTTS. Residues 55–87 form a disordered region; sequence ASSSSSTTTSNDDNNQKGYFLETNRSTGTYDPN. Residues 65–87 show a composition bias toward polar residues; the sequence is NDDNNQKGYFLETNRSTGTYDPN.

Its subcellular location is the cell membrane. This is an uncharacterized protein from Mycoplasma pneumoniae (strain ATCC 29342 / M129 / Subtype 1) (Mycoplasmoides pneumoniae).